Reading from the N-terminus, the 449-residue chain is Methionine aminopeptidase 2 (449 aa).

Residues 1-91 (MAAQAAPELA…PRIPLTTLFP (91 aa)) are disordered. Positions 34-50 (EEAENEGDSEDDRDDEQ) are enriched in acidic residues. Positions 61 to 75 (KKKKKKRPKKKKKTA) are enriched in basic residues. His-199 serves as a coordination point for substrate. A divalent metal cation-binding residues include Asp-219, Asp-230, and His-299. Substrate is bound at residue His-307. Positions 335 and 430 each coordinate a divalent metal cation.

This sequence belongs to the peptidase M24A family. Methionine aminopeptidase eukaryotic type 2 subfamily. Requires Co(2+) as cofactor. The cofactor is Zn(2+). Mn(2+) is required as a cofactor. It depends on Fe(2+) as a cofactor.

The protein resides in the cytoplasm. The catalysed reaction is Release of N-terminal amino acids, preferentially methionine, from peptides and arylamides.. In terms of biological role, cotranslationally removes the N-terminal methionine from nascent proteins. The N-terminal methionine is often cleaved when the second residue in the primary sequence is small and uncharged (Met-Ala-, Cys, Gly, Pro, Ser, Thr, or Val). The chain is Methionine aminopeptidase 2 from Trichophyton verrucosum (strain HKI 0517).